Reading from the N-terminus, the 118-residue chain is Peptidyl-tRNA hydrolase (118 aa).

It belongs to the PTH2 family.

It localises to the cytoplasm. It carries out the reaction an N-acyl-L-alpha-aminoacyl-tRNA + H2O = an N-acyl-L-amino acid + a tRNA + H(+). In terms of biological role, the natural substrate for this enzyme may be peptidyl-tRNAs which drop off the ribosome during protein synthesis. The chain is Peptidyl-tRNA hydrolase from Thermococcus sibiricus (strain DSM 12597 / MM 739).